A 602-amino-acid chain; its full sequence is T-box transcription factor TBX15 (602 aa).

The disordered stretch occupies residues 43-95; that stretch reads SMEALSPAGPLGDTDDPATHGLEPHPDSEQSTGSDSEVLTERTSCSFSTHTDL. A compositionally biased stretch (polar residues) spans 71 to 94; it reads EQSTGSDSEVLTERTSCSFSTHTD. The segment at residues 122–304 is a DNA-binding region (T-box); it reads LWKRFHDIGT…RNPFAKGFRD (183 aa). Position 330 is a phosphothreonine (Thr-330). Disordered regions lie at residues 338–369 and 425–444; these read QKQQ…LSPS and QSGT…QRTP. The span at 346 to 369 shows a compositional bias: low complexity; that stretch reads GTSPTTSSTGTPSPSASSHLLSPS.

Can form a heterodimer with TBX18.

Its subcellular location is the nucleus. Probable transcriptional regulator involved in the development of the skeleton of the limb, vertebral column and head. Acts by controlling the number of mesenchymal precursor cells and chondrocytes. The protein is T-box transcription factor TBX15 (Tbx15) of Mus musculus (Mouse).